The primary structure comprises 434 residues: MRVLVLGSGVIGTASAYYLARQGFEVTVVDRQPAVAMETSFANAGQISPGYASPWAAPGVPLKAIKWLLERHAPLAIKLTGDVDQYLWMAQMLRNCTASRYAVNKERMVRLSEYSRDCLDELRAETGINYENRSLGTTQLFRTQAQVDAAAKDIAVLEQSGVPYELLDRDGIARVEPALAGVKDILAGALRLPNDQTGDCQLFTTKLADMALKLGVEFRFGQDIQRLDFAGDRINGVWIDGKLETADRYVLALGSYSPQMLKPLGIKAPVYPLKGYSLTVPITNADMAPTSTILDETYKVAITRFDNRIRVGGMAEIAGFDLSLNPRRRETLEMIVNDLYPRGGDLSQASFWTGLRPATPDGTPIVGATGFRNLFLNTGHGTLGWTMACGSGRLLADLIARKKPQISAEGLDISRYGNSREVAKHGQSAPAHQQ.

3–17 (VLVLGSGVIGTASAY) provides a ligand contact to FAD.

The protein belongs to the DadA oxidoreductase family. It depends on FAD as a cofactor.

The catalysed reaction is a D-alpha-amino acid + A + H2O = a 2-oxocarboxylate + AH2 + NH4(+). The protein operates within amino-acid degradation; D-alanine degradation; NH(3) and pyruvate from D-alanine: step 1/1. Its function is as follows. Oxidative deamination of D-amino acids. The sequence is that of D-amino acid dehydrogenase from Pseudomonas putida (strain ATCC 700007 / DSM 6899 / JCM 31910 / BCRC 17059 / LMG 24140 / F1).